The following is a 308-amino-acid chain: CD276 antigen homolog (308 aa).

The first 15 residues, 1 to 15 (MAALCLLLLLSLAEA), serve as a signal peptide directing secretion. Residues 16–236 (IDLRVPELPV…VTGQHLSFPP (221 aa)) lie on the Extracellular side of the membrane. Positions 21–125 (PELPVIGLLD…VQNSSSASVS (105 aa)) constitute an Ig-like V-type domain. 2 disulfide bridges follow: Cys37/Cys112 and Cys155/Cys210. The 94-residue stretch at 135–228 (PTLHLEPSEA…DVTHASLTVT (94 aa)) folds into the Ig-like C2-type domain. The helical transmembrane segment at 237-257 (LVLWVTVGLSICLLCLLVALA) threads the bilayer. The Cytoplasmic segment spans residues 258–308 (CVCRKHLKQTCEEEQENAGNEEHEENGELKTAMQPLKVTSPGEDDDAECLE). Residues 270–308 (EEQENAGNEEHEENGELKTAMQPLKVTSPGEDDDAECLE) form a disordered region. The span at 299–308 (GEDDDAECLE) shows a compositional bias: acidic residues.

It belongs to the immunoglobulin superfamily. BTN/MOG family.

Its subcellular location is the membrane. Its function is as follows. Modulates immune responses. This is CD276 antigen homolog (cd276) from Xenopus laevis (African clawed frog).